The following is a 272-amino-acid chain: Sordarin/hypoxysordarin biosynthesis cluster protein P (272 aa).

2 N-linked (GlcNAc...) asparagine glycosylation sites follow: N6 and N23. Helical transmembrane passes span 31 to 51 (FLAS…LLFL) and 67 to 87 (AYHM…VDLA). The N-linked (GlcNAc...) asparagine glycan is linked to N208.

The protein localises to the membrane. It participates in antibiotic biosynthesis. Functionally, part of the gene cluster that mediates the biosynthesis of sordarin and hypoxysordarin, glycoside antibiotics with a unique tetracyclic diterpene aglycone structure. First, the geranylgeranyl diphosphate synthase sdnC constructs GGDP from farnesyl diphosphate and isopentenyl diphosphate. The diterpene cyclase sdnA then catalyzes the cyclization of GGDP to afford cycloaraneosene. Cycloaraneosene is then hydroxylated four times by the putative cytochrome P450 monooxygenases sdnB, sdnE, sdnF and sdnH to give a hydroxylated cycloaraneosene derivative such as cycloaraneosene-8,9,13,19-tetraol. Although the order of the hydroxylations is unclear, at least C8, C9 and C13 of the cycloaraneosene skeleton are hydroxylated before the sordaricin formation. Dehydration of the 13-hydroxy group of the hydroxylated cycloaraneosene derivative might be catalyzed by an unassigned hypothetical protein such as sdnG and sdnP to construct the cyclopentadiene moiety. The FAD-dependent oxidoreductase sdnN is proposed to catalyze the oxidation at C9 of the hydroxylated cycloaraneosene derivative and also catalyze the Baeyer-Villiger oxidation to give the lactone intermediate. The presumed lactone intermediate would be hydrolyzed to give an acrolein moiety and a carboxylate moiety. Then, [4+2]cycloaddition would occur between the acrolein moiety and the cyclopentadiene moiety to give sordaricin. SdnN might also be involved in the [4+2]cycloaddition after the hypothesized oxidation to accommodate the oxidized product and prompt the [4+2]cycloaddition. GDP-6-deoxy-D-altrose may be biosynthesized from GDP-D-mannose by the putative GDP-mannose-4,6-dehydratase sdnI and the short-chain dehydrogenase sdnK. The glycosyltransferase sdnJ catalyzes the attachment of 6-deoxy-D-altrose onto the 19-hydroxy group of sordaricin to give 4'-O-demethylsordarin. The methyltransferase sdnD would complete the biosynthesis of sordarin. Sordarin can be further modified into hypoxysordarin. The unique acyl chain at the 3'-hydroxy group of hypoxysordarin would be constructed by an iterative type I PKS sdnO and the trans-acting polyketide methyltransferase sdnL. SdnL would be responsible for the introduction of an alpha-methyl group of the polyketide chain. Alternatively, the beta-lactamase-like protein sdnR might be responsible for the cleavage and transfer of the polyketide chain from the PKS sdnO to sordarin. Two putative cytochrome P450 monooxygenases, sdnQ and sdnT, might catalyze the epoxidations of the polyketide chain to complete the biosynthesis of hypoxysordarin. Transcriptional regulators sdnM and sdnS are presumably encoded for the transcriptional regulation of the expression of the sdn gene cluster. In Sordaria araneosa (Pleurage araneosa), this protein is Sordarin/hypoxysordarin biosynthesis cluster protein P.